The following is a 240-amino-acid chain: tRNA pseudouridine synthase B (240 aa).

Residue Asp54 is the Nucleophile of the active site.

Belongs to the pseudouridine synthase TruB family. Type 1 subfamily.

It carries out the reaction uridine(55) in tRNA = pseudouridine(55) in tRNA. In terms of biological role, responsible for synthesis of pseudouridine from uracil-55 in the psi GC loop of transfer RNAs. In Chlorobaculum tepidum (strain ATCC 49652 / DSM 12025 / NBRC 103806 / TLS) (Chlorobium tepidum), this protein is tRNA pseudouridine synthase B.